The sequence spans 151 residues: Flavodoxin YqcA (151 aa).

A Flavodoxin-like domain is found at 4–145; it reads IGIFVGTVYG…ISCPWVEAWA (142 aa). Residues 10 to 15 and 99 to 101 each bind FMN; these read TVYGNA and NFC.

This sequence belongs to the flavodoxin family. MioC subfamily. In terms of assembly, monomer. FMN serves as cofactor.

In terms of biological role, probable electron transporter. The chain is Flavodoxin YqcA from Pectobacterium carotovorum subsp. carotovorum (Erwinia carotovora subsp. carotovora).